A 100-amino-acid chain; its full sequence is Urease subunit gamma (100 aa).

Belongs to the urease gamma subunit family. As to quaternary structure, heterotrimer of UreA (gamma), UreB (beta) and UreC (alpha) subunits. Three heterotrimers associate to form the active enzyme.

The protein localises to the cytoplasm. It catalyses the reaction urea + 2 H2O + H(+) = hydrogencarbonate + 2 NH4(+). It functions in the pathway nitrogen metabolism; urea degradation; CO(2) and NH(3) from urea (urease route): step 1/1. This Marinomonas sp. (strain MWYL1) protein is Urease subunit gamma.